A 78-amino-acid chain; its full sequence is Large ribosomal subunit protein bL28 (78 aa).

The tract at residues Met-1–Leu-33 is disordered. A compositionally biased stretch (polar residues) spans Thr-14–Lys-24.

The protein belongs to the bacterial ribosomal protein bL28 family.

In Salinibacter ruber (strain DSM 13855 / M31), this protein is Large ribosomal subunit protein bL28.